A 161-amino-acid chain; its full sequence is Interleukin-17F (161 aa).

Positions 1 to 28 (MKGSCETTMVKSLLLLMLGFAIISSGAA) are cleaved as a signal peptide. Asparagine 83 is a glycosylation site (N-linked (GlcNAc...) asparagine). 2 disulfides stabilise this stretch: cysteine 100–cysteine 150 and cysteine 105–cysteine 152.

The protein belongs to the IL-17 family. In terms of assembly, homodimer; disulfide-linked. Heterodimer with IL17A (IL17A-IL17F). Forms complexes with IL17RA and IL17RC receptors with 2:1 binding stoichiometry: two receptor chains for one interleukin molecule. IL17F homodimer forms predominantly complexes with IL17RC homodimer, whereas IL17A-IL17F favors complexes with IL17RA-IL17RC. IL17RA and IL17RC chains cannot distinguish between IL17A and IL17F molecules, potentially enabling the formation of topologically distinct complexes.

It is found in the secreted. In terms of biological role, effector cytokine of innate and adaptive immune system involved in antimicrobial host defense and maintenance of tissue integrity. IL17A-IL17F signals via IL17RA-IL17RC heterodimeric receptor complex, triggering homotypic interaction of IL17RA and IL17RC chains with TRAF3IP2 adapter through SEFIR domains. This leads to downstream TRAF6-mediated activation of NF-kappa-B and MAPkinase pathways ultimately resulting in transcriptional activation of cytokines, chemokines, antimicrobial peptides and matrix metalloproteinases, with potential strong immune inflammation. IL17A-IL17F is primarily involved in host defense against extracellular bacteria and fungi by inducing neutrophilic inflammation. As signature effector cytokine of T-helper 17 cells (Th17), primarily induces neutrophil activation and recruitment at infection and inflammatory sites. Stimulates the production of antimicrobial beta-defensins DEFB1, DEFB103A, and DEFB104A by mucosal epithelial cells, limiting the entry of microbes through the epithelial barriers. IL17F homodimer can signal via IL17RC homodimeric receptor complex, triggering downstream activation of TRAF6 and NF-kappa-B signaling pathway. Via IL17RC induces transcriptional activation of IL33, a potent cytokine that stimulates group 2 innate lymphoid cells and adaptive T-helper 2 cells involved in pulmonary allergic response to fungi. Likely via IL17RC, promotes sympathetic innervation of peripheral organs by coordinating the communication between gamma-delta T cells and parenchymal cells. Stimulates sympathetic innervation of thermogenic adipose tissue by driving TGFB1 expression. Regulates the composition of intestinal microbiota and immune tolerance by inducing antimicrobial proteins that specifically control the growth of commensal Firmicutes and Bacteroidetes. This chain is Interleukin-17F (Il17f), found in Rattus norvegicus (Rat).